A 482-amino-acid chain; its full sequence is Hydrogenase transcriptional regulatory protein HoxA (482 aa).

The Response regulatory domain maps to 7 to 121 (TVLVVDDETR…HLIDTVRQAV (115 aa)). Aspartate 55 bears the 4-aspartylphosphate mark. One can recognise a Sigma-54 factor interaction domain in the interval 167 to 394 (APGSPLDAVC…LRNEIYRAVA (228 aa)). ATP is bound by residues 193–200 (GESGTGKE) and 265–274 (EIGDTSPAFQ). The segment at residues 456–475 (KTHAAKELGLSRVGLRQKLL) is a DNA-binding region (H-T-H motif).

The protein localises to the cytoplasm. Its function is as follows. Probable member of the two-component regulatory system involved in the regulation of the hydrogenase activity. HoxA is probably phosphorylated by a sensory component (which could be HoxX) and then acts in conjunction with sigma-54 as a transcriptional activator. This Cupriavidus necator (strain ATCC 17699 / DSM 428 / KCTC 22496 / NCIMB 10442 / H16 / Stanier 337) (Ralstonia eutropha) protein is Hydrogenase transcriptional regulatory protein HoxA (hoxA).